We begin with the raw amino-acid sequence, 431 residues long: Enolase (431 aa).

Q167 serves as a coordination point for (2R)-2-phosphoglycerate. The Proton donor role is filled by E209. Mg(2+) is bound by residues D246, E289, and D316. (2R)-2-phosphoglycerate contacts are provided by K341, R370, S371, and K392. K341 functions as the Proton acceptor in the catalytic mechanism.

The protein belongs to the enolase family. Component of the RNA degradosome, a multiprotein complex involved in RNA processing and mRNA degradation. The cofactor is Mg(2+).

The protein resides in the cytoplasm. It localises to the secreted. Its subcellular location is the cell surface. The enzyme catalyses (2R)-2-phosphoglycerate = phosphoenolpyruvate + H2O. It participates in carbohydrate degradation; glycolysis; pyruvate from D-glyceraldehyde 3-phosphate: step 4/5. In terms of biological role, catalyzes the reversible conversion of 2-phosphoglycerate (2-PG) into phosphoenolpyruvate (PEP). It is essential for the degradation of carbohydrates via glycolysis. The chain is Enolase from Shewanella sp. (strain ANA-3).